Consider the following 245-residue polypeptide: tRNA pseudouridine synthase A (245 aa).

Residue aspartate 52 is the Nucleophile of the active site. Residue tyrosine 111 participates in substrate binding.

The protein belongs to the tRNA pseudouridine synthase TruA family. In terms of assembly, homodimer.

It catalyses the reaction uridine(38/39/40) in tRNA = pseudouridine(38/39/40) in tRNA. In terms of biological role, formation of pseudouridine at positions 38, 39 and 40 in the anticodon stem and loop of transfer RNAs. The sequence is that of tRNA pseudouridine synthase A from Zymomonas mobilis subsp. mobilis (strain ATCC 31821 / ZM4 / CP4).